The primary structure comprises 406 residues: Tyrosine--tRNA ligase (406 aa).

The short motif at 48–57 (PSRPDLHLGH) is the 'HIGH' region element. Residues 232–236 (KMSKS) carry the 'KMSKS' region motif. Lys235 lines the ATP pocket. The region spanning 339–401 (MPVVELLMAL…GKRKFFKVAR (63 aa)) is the S4 RNA-binding domain.

It belongs to the class-I aminoacyl-tRNA synthetase family. TyrS type 2 subfamily. Homodimer.

The protein localises to the cytoplasm. It carries out the reaction tRNA(Tyr) + L-tyrosine + ATP = L-tyrosyl-tRNA(Tyr) + AMP + diphosphate + H(+). Catalyzes the attachment of tyrosine to tRNA(Tyr) in a two-step reaction: tyrosine is first activated by ATP to form Tyr-AMP and then transferred to the acceptor end of tRNA(Tyr). The sequence is that of Tyrosine--tRNA ligase from Chlorobaculum tepidum (strain ATCC 49652 / DSM 12025 / NBRC 103806 / TLS) (Chlorobium tepidum).